The following is a 228-amino-acid chain: Mediator of RNA polymerase II transcription subunit 7-A (228 aa).

It belongs to the Mediator complex subunit 7 family. As to quaternary structure, component of the Mediator complex.

The protein localises to the nucleus. Component of the Mediator complex, a coactivator involved in the regulated transcription of nearly all RNA polymerase II-dependent genes. Mediator functions as a bridge to convey information from gene-specific regulatory proteins to the basal RNA polymerase II transcription machinery. Mediator is recruited to promoters by direct interactions with regulatory proteins and serves as a scaffold for the assembly of a functional preinitiation complex with RNA polymerase II and the general transcription factors. The chain is Mediator of RNA polymerase II transcription subunit 7-A (med7-a) from Xenopus laevis (African clawed frog).